The following is an 8525-amino-acid chain: Nebulin (8525 aa).

The disordered stretch occupies residues Thr-34–Lys-70. A compositionally biased stretch (low complexity) spans Ser-48 to Lys-64. 235 Nebulin repeats span residues Thr-83–Gly-110, Pro-112–Thr-146, Asp-156–Asp-181, Lys-182–Ser-216, Leu-217–Ala-251, Gln-252–Lys-286, Glu-296–Asp-321, Ile-323–Gly-357, Asn-362–Ala-396, Glu-403–Leu-431, His-433–Gly-467, Lys-501–Phe-535, Lys-536–Ala-570, Lys-572–Gly-606, Gly-610–Ala-644, His-680–Gly-714, Lys-748–Phe-782, Lys-783–Ala-817, Lys-819–Gly-853, Gly-857–Thr-891, Ile-892–Lys-918, Ser-923–Lys-957, Glu-968–Gln-986, Lys-992–His-1026, Lys-1027–Lys-1061, Gly-1063–Gly-1097, Gly-1101–Ser-1135, Lys-1136–His-1166, His-1167–Lys-1201, Asp-1212–Gln-1230, Lys-1236–His-1270, Lys-1271–Ala-1305, Gly-1307–Gly-1341, Gly-1345–Thr-1379, Ser-1380–Gln-1407, His-1411–Lys-1445, Glu-1456–Gln-1474, Lys-1480–His-1514, Lys-1515–Ala-1549, Gly-1551–Gly-1585, Gly-1589–Thr-1623, Lys-1624–His-1654, His-1655–Lys-1689, Glu-1697–Phe-1725, Asp-1730–Thr-1758, Thr-1759–Lys-1793, Gly-1795–Gly-1829, Gly-1833–Thr-1867, Ser-1868–Arg-1894, Thr-1899–Lys-1933, Lys-1949–Gln-1962, Lys-1968–Thr-2002, Lys-2003–Lys-2037, Gly-2039–Gly-2073, Gly-2077–Thr-2111, Ser-2112–Lys-2138, Lys-2143–Lys-2177, Glu-2188–Gln-2206, Gln-2212–Thr-2246, Lys-2247–Lys-2281, Gly-2283–Gly-2317, Gly-2321–Thr-2355, Lys-2356–Lys-2382, Gln-2387–Gly-2421, Lys-2436–Gln-2449, Lys-2455–Thr-2489, Gln-2490–Arg-2524, Gly-2526–Gly-2560, Gly-2564–Thr-2598, Lys-2599–Lys-2625, Gln-2630–Gly-2664, Lys-2679–Gln-2692, Lys-2698–Thr-2732, Thr-2733–Arg-2767, Gly-2769–Gly-2803, Gly-2807–Thr-2841, Lys-2842–Lys-2868, Gln-2873–Gly-2907, Asp-2917–Gln-2935, Lys-2941–Thr-2975, Gln-2976–Lys-3010, Gly-3012–Gly-3046, Gly-3050–Thr-3084, Lys-3085–Lys-3111, Glu-3116–Gly-3150, Ser-3158–Gln-3178, Lys-3184–Thr-3218, Gln-3219–Lys-3253, Gly-3255–Gly-3289, Gly-3293–Thr-3327, Lys-3328–Lys-3354, Glu-3359–Gly-3393, Ser-3401–Gln-3421, Lys-3427–Thr-3461, Gln-3462–Lys-3496, Gly-3498–Gly-3532, Gly-3536–Thr-3570, Arg-3571–Lys-3597, Glu-3602–Gly-3636, Asp-3643–Gln-3664, Lys-3670–Lys-3704, Thr-3705–Lys-3739, Gly-3741–Gly-3775, Gly-3779–Thr-3813, Lys-3814–Lys-3840, Glu-3845–Gly-3879, Glu-3889–Gln-3907, Lys-3913–Thr-3947, Ser-3948–Met-3982, Asp-3984–Gly-4018, Gly-4022–Thr-4056, Lys-4057–Arg-4083, Glu-4088–Gly-4122, Glu-4132–Arg-4149, Ser-4156–Ser-4190, Asn-4191–Gln-4225, Gly-4227–Gly-4261, Gly-4265–Gly-4299, Ile-4300–Arg-4326, Gln-4331–Gly-4365, Glu-4375–Arg-4392, Lys-4399–Ala-4433, Asn-4434–Met-4468, Gly-4470–Gly-4504, Gly-4508–Ala-4542, Lys-4543–Arg-4569, His-4574–Gly-4608, Glu-4618–Arg-4635, Ser-4642–Ser-4676, Asn-4677–Gln-4711, Gly-4713–Gly-4747, Gly-4751–Gly-4785, Ile-4786–Arg-4812, Gln-4817–Gly-4851, Glu-4861–Arg-4878, Lys-4885–Ala-4919, Asn-4920–Met-4954, Gly-4956–Gly-4990, Gly-4994–Ala-5028, Lys-5029–Arg-5055, His-5060–Gly-5094, Glu-5104–Arg-5121, Ser-5128–Ser-5162, Asn-5163–Gln-5197, Gly-5199–Gly-5233, Gly-5237–Gly-5271, Ile-5272–Arg-5298, Gln-5303–Gly-5337, Glu-5347–Arg-5364, Lys-5371–Ala-5405, Asn-5406–Met-5440, Gly-5442–Gly-5476, Gly-5480–Ala-5514, Lys-5515–Arg-5541, Arg-5546–Gly-5580, Ser-5588–Arg-5607, Lys-5614–Thr-5648, Ser-5649–Ala-5683, Asp-5690–Gly-5718, Gly-5722–Ala-5756, Lys-5757–Arg-5783, Gln-5788–Gly-5822, Asp-5829–Glu-5853, Asn-5856–Ser-5890, Thr-5893–Ala-5924, Gly-5926–Gly-5960, Gly-5964–Ala-5998, Lys-5999–Arg-6025, Gln-6030–Gly-6064, Asp-6071–Pro-6099, Asn-6100–Gly-6134, Lys-6135–Ala-6169, Gly-6171–Gly-6205, Ala-6209–Ala-6243, Asn-6244–His-6274, Gln-6275–Gly-6309, Asp-6316–Gln-6344, Asn-6345–Asp-6379, Lys-6380–Ala-6414, Ser-6416–Ala-6450, Val-6458–Met-6488, Lys-6489–Arg-6515, His-6532–Gly-6554, Asp-6561–Asn-6589, Asp-6590–Arg-6624, Lys-6626–Thr-6660, Gly-6661–Ala-6695, Gly-6697–Asp-6731, Lys-6732–Gly-6766, His-6767–Gly-6801, Asp-6808–Asp-6836, Lys-6837–Ser-6871, Ile-6872–Pro-6906, His-6907–Asp-6941, Lys-6942–Gly-6976, Lys-6977–Gly-7011, Ile-7012–Gly-7046, Asp-7053–Ser-7081, Asp-7082–Ser-7110, Pro-7125–Asp-7151, Lys-7152–Pro-7186, Gly-7188–Ser-7222, Asn-7223–Ala-7257, His-7258–Gly-7292, Val-7297–Gly-7327, Thr-7328–Ala-7362, Ser-7365–Gly-7399, Asn-7402–Glu-7433, His-7436–Ser-7470, Pro-7479–Gly-7505, Asp-7514–Lys-7542, Pro-7543–Gly-7577, His-7578–Gly-7612, Glu-7619–Lys-7647, Asn-7650–Arg-7684, Gly-7687–Lys-7721, Glu-7731–Ala-7759, Asn-7760–Ser-7794, Tyr-7795–Gly-7829, Lys-7830–Ala-7864, Lys-7867–Glu-7888, Gln-7892–Leu-7921, Thr-7930–Pro-7957, Thr-7961–Pro-7988, Thr-7992–Asn-8013, Lys-8016–Leu-8045, Thr-8054–Asn-8075, Lys-8078–Pro-8112, Thr-8116–Pro-8143, Thr-8147–Asn-8168, Lys-8171–Pro-8205, Thr-8209–Arg-8232, Lys-8233–Gln-8267, Lys-8269–Gly-8303, and Cys-8304–Arg-8330. Positions Ile-8313 to Gly-8468 are interaction with SVIL. 2 disordered regions span residues Gln-8385–Tyr-8422 and Thr-8439–His-8463. Positions Gly-8405 to Leu-8419 are enriched in basic and acidic residues. Residues Gln-8444 to Ser-8459 show a composition bias toward low complexity. The SH3 domain maps to Thr-8466–Ile-8525.

As to quaternary structure, monomer and homooligomer. Interacts with TTN/titin. Interacts with SVIL. Interacts (via nebulin repeats 160-164) with DES. Expressed in skeletal muscle (at protein level). Located in the thin filament of striated muscle.

The protein localises to the cytoplasm. It is found in the myofibril. It localises to the sarcomere. The protein resides in the cytoskeleton. In terms of biological role, this giant muscle protein may be involved in maintaining the structural integrity of sarcomeres and the membrane system associated with the myofibrils. Binds and stabilize F-actin. The polypeptide is Nebulin (NEB) (Homo sapiens (Human)).